The primary structure comprises 653 residues: ATP-dependent rRNA helicase SPB4 (653 aa).

A Q motif motif is present at residues 17–45 (WQALTPPLSEWILDAVAAMGFTRMTPVQA). The Helicase ATP-binding domain maps to 48 to 257 (IPLFMGHKDV…RVGLRNPVKI (210 aa)). 61-68 (AVTGSGKT) contacts ATP. A DEAD box motif is present at residues 205–208 (DEAD). The Helicase C-terminal domain maps to 291 to 444 (AIRQILNSID…SPPVALSDTL (154 aa)). Residues 534 to 653 (KQREKHRQES…DGESEFEGFD (120 aa)) are disordered. Positions 558-569 (PSSSSNNDTAPW) are enriched in polar residues. A coiled-coil region spans residues 571-627 (KTLEKKSDKEKRRERKRAKKEREHWEKMTEEEKTKSRETHQMLEELRKKNRQELNAK). Composition is skewed to basic and acidic residues over residues 572–581 (TLEKKSDKEK) and 590–626 (KERE…ELNA). Residues 627–636 (KSHTSSSVLS) are compositionally biased toward polar residues. Over residues 641–653 (AELDGESEFEGFD) the composition is skewed to acidic residues.

It belongs to the DEAD box helicase family. DDX55/SPB4 subfamily. As to quaternary structure, component of pre-60S ribosomal complexes.

The protein resides in the nucleus. It localises to the nucleolus. The catalysed reaction is ATP + H2O = ADP + phosphate + H(+). ATP-binding RNA helicase involved in the biogenesis of 60S ribosomal subunits. Binds 90S pre-ribosomal particles and dissociates from pre-60S ribosomal particles after processing of 27SB pre-rRNA. Required for the normal formation of 18S rRNA through the processing of pre-rRNAs at sites A0, A1 and A2, and the normal formation of 25S and 5.8S rRNAs through the processing of pre-rRNAs at sites C1 and C2. The polypeptide is ATP-dependent rRNA helicase SPB4 (Coccidioides immitis (strain RS) (Valley fever fungus)).